A 459-amino-acid polypeptide reads, in one-letter code: Mitochondrial distribution and morphology protein 10 (459 aa).

It belongs to the MDM10 family. Component of the ER-mitochondria encounter structure (ERMES) or MDM complex, composed of MMM1, MDM10, MDM12 and MDM34. Associates with the mitochondrial outer membrane sorting assembly machinery SAM(core) complex.

Its subcellular location is the mitochondrion outer membrane. Functionally, component of the ERMES/MDM complex, which serves as a molecular tether to connect the endoplasmic reticulum and mitochondria. Components of this complex are involved in the control of mitochondrial shape and protein biogenesis and may function in phospholipid exchange. MDM10 is involved in the late assembly steps of the general translocase of the mitochondrial outer membrane (TOM complex). Functions in the TOM40-specific route of the assembly of outer membrane beta-barrel proteins, including the association of TOM40 with the receptor TOM22 and small TOM proteins. Can associate with the SAM(core) complex as well as the MDM12-MMM1 complex, both involved in late steps of the major beta-barrel assembly pathway, that is responsible for biogenesis of all outer membrane beta-barrel proteins. May act as a switch that shuttles between both complexes and channels precursor proteins into the TOM40-specific pathway. Plays a role in mitochondrial morphology and in the inheritance of mitochondria. The protein is Mitochondrial distribution and morphology protein 10 of Clavispora lusitaniae (strain ATCC 42720) (Yeast).